The chain runs to 354 residues: tRNA-specific 2-thiouridylase MnmA (354 aa).

ATP is bound by residues 6–13 (LLSGGVDS) and Leu33. Cys100 functions as the Nucleophile in the catalytic mechanism. Cys100 and Cys195 are joined by a disulfide. Gly123 contacts ATP. The interval 145 to 147 (KDQ) is interaction with tRNA. The active-site Cysteine persulfide intermediate is the Cys195.

This sequence belongs to the MnmA/TRMU family.

Its subcellular location is the cytoplasm. The enzyme catalyses S-sulfanyl-L-cysteinyl-[protein] + uridine(34) in tRNA + AH2 + ATP = 2-thiouridine(34) in tRNA + L-cysteinyl-[protein] + A + AMP + diphosphate + H(+). Its function is as follows. Catalyzes the 2-thiolation of uridine at the wobble position (U34) of tRNA, leading to the formation of s(2)U34. This chain is tRNA-specific 2-thiouridylase MnmA, found in Borrelia recurrentis (strain A1).